The following is a 312-amino-acid chain: Glyoxylate/hydroxypyruvate reductase A (312 aa).

The active site involves arginine 227. The Proton donor role is filled by histidine 275.

The protein belongs to the D-isomer specific 2-hydroxyacid dehydrogenase family. GhrA subfamily.

It localises to the cytoplasm. It carries out the reaction glycolate + NADP(+) = glyoxylate + NADPH + H(+). The enzyme catalyses (R)-glycerate + NAD(+) = 3-hydroxypyruvate + NADH + H(+). The catalysed reaction is (R)-glycerate + NADP(+) = 3-hydroxypyruvate + NADPH + H(+). Functionally, catalyzes the NADPH-dependent reduction of glyoxylate and hydroxypyruvate into glycolate and glycerate, respectively. The protein is Glyoxylate/hydroxypyruvate reductase A of Shigella boydii serotype 18 (strain CDC 3083-94 / BS512).